We begin with the raw amino-acid sequence, 121 residues long: Large ribosomal subunit protein uL14 (121 aa).

It belongs to the universal ribosomal protein uL14 family. As to quaternary structure, part of the 50S ribosomal subunit. Forms a cluster with proteins L3 and L19. In the 70S ribosome, L14 and L19 interact and together make contacts with the 16S rRNA in bridges B5 and B8.

Its function is as follows. Binds to 23S rRNA. Forms part of two intersubunit bridges in the 70S ribosome. The sequence is that of Large ribosomal subunit protein uL14 from Opitutus terrae (strain DSM 11246 / JCM 15787 / PB90-1).